Reading from the N-terminus, the 562-residue chain is BOS complex subunit NCLN (562 aa).

Residues 1–41 form the signal peptide; the sequence is MLEEAGEVLESVLKASCLPLSFLLFVPAVLLLLGPPPAAEA. The Extracellular segment spans residues 42 to 521; it reads AHESTVYRMQ…VMNAYRVKPA (480 aa). N-linked (GlcNAc...) asparagine glycosylation occurs at Asn-240. The tract at residues 420-447 is disordered; sequence GFDEGHLQPNREGSTCRSADLHGSDADP. A helical transmembrane segment spans residues 522–542; sequence IFDLLLAVCIAAYLGVAYVAV. The Cytoplasmic portion of the chain corresponds to 543–562; the sequence is QNFGLLYRMIQRLSLKTKQQ.

It belongs to the nicastrin family. As to quaternary structure, component of the multi-pass translocon (MPT) complex.

Its subcellular location is the endoplasmic reticulum membrane. In terms of biological role, component of the multi-pass translocon (MPT) complex that mediates insertion of multi-pass membrane proteins into the lipid bilayer of membranes. The MPT complex takes over after the SEC61 complex: following membrane insertion of the first few transmembrane segments of proteins by the SEC61 complex, the MPT complex occludes the lateral gate of the SEC61 complex to promote insertion of subsequent transmembrane regions. May antagonize Nodal signaling and subsequent organization of axial structures during mesodermal patterning, via its interaction with NOMO. This Gallus gallus (Chicken) protein is BOS complex subunit NCLN (NCLN).